A 734-amino-acid chain; its full sequence is Putative K(+)-stimulated pyrophosphate-energized sodium pump (734 aa).

5 consecutive transmembrane segments (helical) span residues 3-23 (SILFWLVPVASVLALCFAYYF), 58-78 (IVGCVFLGLVILFSIMAYGFH), 82-102 (VWVPIAFLTGGFFSGLSGFLG), 134-154 (VMGLVVVGLGLLDISFWYLLL), and 169-189 (LCVITTTMLTFGMGASTQALF). Position 199 (Lys-199) interacts with substrate. Mg(2+) contacts are provided by Asp-202, Asp-206, Asn-229, and Asp-232. 7 consecutive transmembrane segments (helical) span residues 244–264 (LYESYCGSILATAALGAAAFI), 275–295 (AVIAPMLIAAVGILLSIIGIF), 314–334 (FGTNLSSVLIVAATFLILWLL), 336–356 (LDNWIWISCAVVVGLLVGIVI), 377–397 (SGKTGPATVIISGIGLGMLST), 398–418 (AIPVIAVVVGIIASFLLASGF), and 423–443 (VGMGLYGIGIAAVGMLSTLGI). Position 455 (Asp-455) interacts with Mg(2+). 4 helical membrane passes run 491–511 (FAIGSAALTGLALLASYIEEI), 557–577 (GMFLGSMMAFLFCGLTMNAVG), 629–649 (ILAPIATGLIFGVTGVLGLLI), and 650–670 (GGLSTGFVLAIFMANAGGAWD). 3 residues coordinate Ca(2+): Asp-670, Asp-696, and Asp-700. A substrate-binding site is contributed by Lys-703. Residues 712–732 (ILIKLMSMVAIVMAGLTVAWS) traverse the membrane as a helical segment.

This sequence belongs to the H(+)-translocating pyrophosphatase (TC 3.A.10) family. K(+)-stimulated subfamily. In terms of assembly, homodimer. Mg(2+) serves as cofactor.

Its subcellular location is the cell inner membrane. It carries out the reaction Na(+)(in) + diphosphate + H2O = Na(+)(out) + 2 phosphate + H(+). Its activity is regulated as follows. Requires K(+) for maximal activity. In terms of biological role, sodium pump that utilizes the energy of pyrophosphate hydrolysis as the driving force for Na(+) movement across the membrane. The sequence is that of Putative K(+)-stimulated pyrophosphate-energized sodium pump from Bacteroides thetaiotaomicron (strain ATCC 29148 / DSM 2079 / JCM 5827 / CCUG 10774 / NCTC 10582 / VPI-5482 / E50).